A 224-amino-acid polypeptide reads, in one-letter code: 2-phospho-L-lactate guanylyltransferase (224 aa).

It belongs to the CofC family. Homodimer.

The catalysed reaction is (2S)-2-phospholactate + GTP + H(+) = (2S)-lactyl-2-diphospho-5'-guanosine + diphosphate. Its pathway is cofactor biosynthesis; coenzyme F420 biosynthesis. In terms of biological role, guanylyltransferase that catalyzes the activation of (2S)-2-phospholactate (2-PL) as (2S)-lactyl-2-diphospho-5'-guanosine, via the condensation of 2-PL with GTP. It is involved in the biosynthesis of coenzyme F420, a hydride carrier cofactor. The polypeptide is 2-phospho-L-lactate guanylyltransferase (Methanobrevibacter smithii (strain ATCC 35061 / DSM 861 / OCM 144 / PS)).